Consider the following 784-residue polypeptide: uncharacterized protein (784 aa).

Residues 422-619 (IRIVQNEQDL…EVFQKIVEVV (198 aa)) form the 3'-5' exonuclease domain.

This is an uncharacterized protein from Caenorhabditis elegans.